Here is a 455-residue protein sequence, read N- to C-terminus: Tumor necrosis factor receptor superfamily member 1A (455 aa).

The signal sequence occupies residues Met-1 to Gly-29. At Leu-30–Thr-211 the chain is on the extracellular side. 4 TNFR-Cys repeats span residues Val-43–Arg-82, Glu-83–Cys-125, Gly-126–Cys-166, and Thr-167–Leu-196. Cystine bridges form between Cys-44–Cys-58, Cys-59–Cys-72, Cys-62–Cys-81, Cys-84–Cys-99, Cys-102–Cys-117, Cys-105–Cys-125, and Cys-127–Cys-143. N-linked (GlcNAc...) asparagine glycosylation is present at Asn-54. Asn-145 and Asn-151 each carry an N-linked (GlcNAc...) asparagine glycan. 5 disulfides stabilise this stretch: Cys-146–Cys-158, Cys-149–Cys-166, Cys-168–Cys-179, Cys-182–Cys-195, and Cys-185–Cys-191. The helical transmembrane segment at Val-212–Leu-232 threads the bilayer. The Cytoplasmic segment spans residues Met-233–Arg-455. Residues Glu-254–Phe-273 are disordered. The interval Leu-338–Pro-348 is N-SMase activation domain (NSD). The Death domain occupies Pro-356–Leu-441. A (Microbial infection) N-beta-linked (GlcNAc) arginine glycan is attached at Arg-376.

As to quaternary structure, binding of TNF to the extracellular domain leads to homotrimerization. The aggregated death domains provide a novel molecular interface that interacts specifically with the death domain of TRADD. Various TRADD-interacting proteins such as TRAFS, RIPK1 and possibly FADD, are recruited to the complex by their association with TRADD. This complex activates at least two distinct signaling cascades, apoptosis and NF-kappa-B signaling. Interacts with BAG4, BABAM2, FEM1B, GRB2, SQSTM1 and TRPC4AP. Interacts directly with NOL3 (via CARD domain); inhibits TNF-signaling pathway. Interacts with SH3RF2, TRADD and RIPK1. SH3RF2 facilitates the recruitment of RIPK1 and TRADD to TNFRSF1A in a TNF-alpha-dependent process. Interacts with PGLYRP1; this interaction is important for cell death induction. Interacts (via death domain) with MADD (via death domain). In terms of assembly, (Microbial infection) Interacts with mumps virus protein SH; this interaction inhibits downstream NF-kappa-B pathway activation. (Microbial infection) Interacts with HCV core protein. As to quaternary structure, (Microbial infection) Interacts with human cytomegalovirus/HHV-5 protein UL138. In terms of assembly, (Microbial infection) Interacts with host TNFRSF1A; this interaction leads to the stimulation of both surface expression and shedding of TNFRSF1A. In terms of processing, the soluble form is produced from the membrane form by proteolytic processing. Post-translationally, (Microbial infection) Glycosylated at Arg-376 by enteropathogenic E.coli protein NleB1 and S.typhimurium protein Ssek3: arginine GlcNAcylation prevents homotypic/heterotypic death domain interactions.

It is found in the cell membrane. It localises to the golgi apparatus membrane. Its subcellular location is the secreted. Its function is as follows. Receptor for TNFSF2/TNF-alpha and homotrimeric TNFSF1/lymphotoxin-alpha. The adapter molecule FADD recruits caspase-8 to the activated receptor. The resulting death-inducing signaling complex (DISC) performs caspase-8 proteolytic activation which initiates the subsequent cascade of caspases (aspartate-specific cysteine proteases) mediating apoptosis. Contributes to the induction of non-cytocidal TNF effects including anti-viral state and activation of the acid sphingomyelinase. In Homo sapiens (Human), this protein is Tumor necrosis factor receptor superfamily member 1A (TNFRSF1A).